Reading from the N-terminus, the 443-residue chain is Xaa-Pro dipeptidase (443 aa).

Asp-246, Asp-257, His-339, Glu-384, and Glu-423 together coordinate Mn(2+).

The protein belongs to the peptidase M24B family. Bacterial-type prolidase subfamily. It depends on Mn(2+) as a cofactor.

It carries out the reaction Xaa-L-Pro dipeptide + H2O = an L-alpha-amino acid + L-proline. Splits dipeptides with a prolyl residue in the C-terminal position. The protein is Xaa-Pro dipeptidase of Escherichia fergusonii (strain ATCC 35469 / DSM 13698 / CCUG 18766 / IAM 14443 / JCM 21226 / LMG 7866 / NBRC 102419 / NCTC 12128 / CDC 0568-73).